Here is a 387-residue protein sequence, read N- to C-terminus: EP300-interacting inhibitor of differentiation 3 (387 aa).

A compositionally biased stretch (basic and acidic residues) spans 1 to 19 (MSEEKCSLTGGEEKGEELA). Residues 1–77 (MSEEKCSLTG…SDDLSPEAPC (77 aa)) are disordered. Positions 32 to 72 (EEDDDDDEEALKKEEEEEEEEEEEDEEEEEEGPDSSSDDLS) are enriched in acidic residues.

The protein belongs to the NSE4 family. In terms of assembly, component of the SMC5-SMC6 complex which consists at least of SMC5, SMC6, NSMCE2, NSMCE1, NSMCE4A or EID3 and NSMCE3. NSMCE1, NSMCE4A or EID3 and NSMCE3 probably form a subcomplex that bridges the head domains of the SMC5:SMC6 heterodimer. Homodimer, and heterodimer with EID2. Interacts with the C-terminal region of CREBBP.

Its subcellular location is the nucleus. The protein resides in the cytoplasm. It localises to the chromosome. It is found in the telomere. Functionally, tissue-specific component of the SMC5-SMC6 complex, a complex involved in repair of DNA double-strand breaks by homologous recombination. The complex may promote sister chromatid homologous recombination by recruiting the SMC1-SMC3 cohesin complex to double-strand breaks. The complex is required for telomere maintenance via recombination and mediates sumoylation of shelterin complex (telosome) components. Its function is as follows. Acts as a repressor of nuclear receptor-dependent transcription possibly by interfering with CREBBP-dependent coactivation. May function as a coinhibitor of other CREBBP/EP300-dependent transcription factors. This is EP300-interacting inhibitor of differentiation 3 from Rattus norvegicus (Rat).